Here is a 121-residue protein sequence, read N- to C-terminus: UPF0102 protein BVU_1879 (121 aa).

It belongs to the UPF0102 family.

The chain is UPF0102 protein BVU_1879 from Phocaeicola vulgatus (strain ATCC 8482 / DSM 1447 / JCM 5826 / CCUG 4940 / NBRC 14291 / NCTC 11154) (Bacteroides vulgatus).